Consider the following 118-residue polypeptide: Large ribosomal subunit protein bL20 (118 aa).

It belongs to the bacterial ribosomal protein bL20 family.

Functionally, binds directly to 23S ribosomal RNA and is necessary for the in vitro assembly process of the 50S ribosomal subunit. It is not involved in the protein synthesizing functions of that subunit. The polypeptide is Large ribosomal subunit protein bL20 (Bacillus mycoides (strain KBAB4) (Bacillus weihenstephanensis)).